The following is a 209-amino-acid chain: Octanoyltransferase (209 aa).

In terms of domain architecture, BPL/LPL catalytic spans 30 to 209 (VNEPEIVYLV…IQTEFNKIFT (180 aa)). Substrate-binding positions include 69–76 (RGGKFTFH), 143–145 (AIG), and 156–158 (GVA). The active-site Acyl-thioester intermediate is the Cys-174.

Belongs to the LipB family.

It localises to the cytoplasm. The enzyme catalyses octanoyl-[ACP] + L-lysyl-[protein] = N(6)-octanoyl-L-lysyl-[protein] + holo-[ACP] + H(+). It functions in the pathway protein modification; protein lipoylation via endogenous pathway; protein N(6)-(lipoyl)lysine from octanoyl-[acyl-carrier-protein]: step 1/2. In terms of biological role, catalyzes the transfer of endogenously produced octanoic acid from octanoyl-acyl-carrier-protein onto the lipoyl domains of lipoate-dependent enzymes. Lipoyl-ACP can also act as a substrate although octanoyl-ACP is likely to be the physiological substrate. This is Octanoyltransferase from Rickettsia canadensis (strain McKiel).